Consider the following 636-residue polypeptide: 1-deoxy-D-xylulose-5-phosphate synthase (636 aa).

Residues H77 and 118-120 each bind thiamine diphosphate; that span reads GHS. D149 contacts Mg(2+). Residues 150-151, N178, Y290, and E375 contribute to the thiamine diphosphate site; that span reads GA. Position 178 (N178) interacts with Mg(2+).

This sequence belongs to the transketolase family. DXPS subfamily. Homodimer. Mg(2+) is required as a cofactor. Requires thiamine diphosphate as cofactor.

It catalyses the reaction D-glyceraldehyde 3-phosphate + pyruvate + H(+) = 1-deoxy-D-xylulose 5-phosphate + CO2. It participates in metabolic intermediate biosynthesis; 1-deoxy-D-xylulose 5-phosphate biosynthesis; 1-deoxy-D-xylulose 5-phosphate from D-glyceraldehyde 3-phosphate and pyruvate: step 1/1. Catalyzes the acyloin condensation reaction between C atoms 2 and 3 of pyruvate and glyceraldehyde 3-phosphate to yield 1-deoxy-D-xylulose-5-phosphate (DXP). The chain is 1-deoxy-D-xylulose-5-phosphate synthase from Cytophaga hutchinsonii (strain ATCC 33406 / DSM 1761 / CIP 103989 / NBRC 15051 / NCIMB 9469 / D465).